Reading from the N-terminus, the 481-residue chain is Xylulose kinase (481 aa).

81 to 82 (QH) is a binding site for substrate. D239 functions as the Proton acceptor in the catalytic mechanism.

It belongs to the FGGY kinase family.

It carries out the reaction D-xylulose + ATP = D-xylulose 5-phosphate + ADP + H(+). Catalyzes the phosphorylation of D-xylulose to D-xylulose 5-phosphate. The protein is Xylulose kinase of Streptomyces rubiginosus.